Reading from the N-terminus, the 435-residue chain is 3-phosphoshikimate 1-carboxyvinyltransferase (435 aa).

3-phosphoshikimate is bound by residues lysine 23, serine 24, and arginine 28. Position 23 (lysine 23) interacts with phosphoenolpyruvate. Glycine 97 and arginine 125 together coordinate phosphoenolpyruvate. Serine 170, serine 171, glutamine 172, serine 198, aspartate 314, asparagine 338, and lysine 342 together coordinate 3-phosphoshikimate. Residue glutamine 172 participates in phosphoenolpyruvate binding. Aspartate 314 functions as the Proton acceptor in the catalytic mechanism. Arginine 346, arginine 388, and lysine 413 together coordinate phosphoenolpyruvate.

The protein belongs to the EPSP synthase family. Monomer.

The protein resides in the cytoplasm. It carries out the reaction 3-phosphoshikimate + phosphoenolpyruvate = 5-O-(1-carboxyvinyl)-3-phosphoshikimate + phosphate. It functions in the pathway metabolic intermediate biosynthesis; chorismate biosynthesis; chorismate from D-erythrose 4-phosphate and phosphoenolpyruvate: step 6/7. Functionally, catalyzes the transfer of the enolpyruvyl moiety of phosphoenolpyruvate (PEP) to the 5-hydroxyl of shikimate-3-phosphate (S3P) to produce enolpyruvyl shikimate-3-phosphate and inorganic phosphate. This Sodalis glossinidius (strain morsitans) protein is 3-phosphoshikimate 1-carboxyvinyltransferase.